Consider the following 160-residue polypeptide: Probable nucleoside diphosphate kinase DDB_G0292928 (160 aa).

ATP contacts are provided by Lys-12, Phe-61, Arg-103, Thr-109, Arg-122, and Asn-132. The active-site Pros-phosphohistidine intermediate is the His-135.

Belongs to the NDK family. The cofactor is Mg(2+).

The catalysed reaction is a 2'-deoxyribonucleoside 5'-diphosphate + ATP = a 2'-deoxyribonucleoside 5'-triphosphate + ADP. It carries out the reaction a ribonucleoside 5'-diphosphate + ATP = a ribonucleoside 5'-triphosphate + ADP. This is Probable nucleoside diphosphate kinase DDB_G0292928 from Dictyostelium discoideum (Social amoeba).